Here is a 491-residue protein sequence, read N- to C-terminus: Glutamyl-tRNA(Gln) amidotransferase subunit A (491 aa).

Active-site charge relay system residues include K78 and S158. The active-site Acyl-ester intermediate is the S182.

Belongs to the amidase family. GatA subfamily. As to quaternary structure, heterotrimer of A, B and C subunits.

It catalyses the reaction L-glutamyl-tRNA(Gln) + L-glutamine + ATP + H2O = L-glutaminyl-tRNA(Gln) + L-glutamate + ADP + phosphate + H(+). Its function is as follows. Allows the formation of correctly charged Gln-tRNA(Gln) through the transamidation of misacylated Glu-tRNA(Gln) in organisms which lack glutaminyl-tRNA synthetase. The reaction takes place in the presence of glutamine and ATP through an activated gamma-phospho-Glu-tRNA(Gln). In Bradyrhizobium sp. (strain BTAi1 / ATCC BAA-1182), this protein is Glutamyl-tRNA(Gln) amidotransferase subunit A.